The chain runs to 362 residues: Prostaglandin E2 receptor EP2 subtype (362 aa).

At Met1 to Glu24 the chain is on the extracellular side. N-linked (GlcNAc...) asparagine glycosylation occurs at Asn6. The helical transmembrane segment at Ser25 to Ala48 threads the bilayer. The Cytoplasmic portion of the chain corresponds to Arg49 to Ser66. The chain crosses the membrane as a helical span at residues Leu67–Ala92. Residues Ser93 to Tyr112 lie on the Extracellular side of the membrane. Cys110 and Cys188 are joined by a disulfide. The chain crosses the membrane as a helical span at residues Phe113–Leu133. The Cytoplasmic segment spans residues Glu134–Arg152. The chain crosses the membrane as a helical span at residues Gly153 to Gly177. At Glu178–Gln199 the chain is on the extracellular side. The chain crosses the membrane as a helical span at residues Leu200–Ile224. Residues Arg225–His262 are Cytoplasmic-facing. The interval Arg234 to Ser255 is disordered. Low complexity predominate over residues Cys235–Pro245. A helical transmembrane segment spans residues Leu263 to Met286. The Extracellular segment spans residues Asp287–Arg299. A helical transmembrane segment spans residues Ala300–Leu323. The Cytoplasmic segment spans residues Arg324–Leu362.

It belongs to the G-protein coupled receptor 1 family.

The protein localises to the cell membrane. Its function is as follows. Receptor for prostaglandin E2 (PGE2). The activity of this receptor is mediated by G(s) proteins that stimulate adenylate cyclase. The subsequent raise in intracellular cAMP is responsible for the relaxing effect of this receptor on smooth muscle. This Mus musculus (Mouse) protein is Prostaglandin E2 receptor EP2 subtype (Ptger2).